The primary structure comprises 306 residues: Homoserine O-acetyltransferase (306 aa).

The Acyl-thioester intermediate role is filled by Cys-142. Lys-163 and Ser-192 together coordinate substrate. The active-site Proton acceptor is His-235. Glu-237 is a catalytic residue. Arg-249 lines the substrate pocket.

The protein belongs to the MetA family.

It is found in the cytoplasm. It catalyses the reaction L-homoserine + acetyl-CoA = O-acetyl-L-homoserine + CoA. Its pathway is amino-acid biosynthesis; L-methionine biosynthesis via de novo pathway; O-acetyl-L-homoserine from L-homoserine: step 1/1. Functionally, transfers an acetyl group from acetyl-CoA to L-homoserine, forming acetyl-L-homoserine. The protein is Homoserine O-acetyltransferase of Brevibacillus brevis (strain 47 / JCM 6285 / NBRC 100599).